The primary structure comprises 411 residues: Dual-specificity RNA methyltransferase RlmN (411 aa).

Glutamate 125 (proton acceptor) is an active-site residue. In terms of domain architecture, Radical SAM core spans glutamate 131–leucine 380. A disulfide bridge links cysteine 138 with cysteine 383. [4Fe-4S] cluster is bound by residues cysteine 145, cysteine 149, and cysteine 152. S-adenosyl-L-methionine is bound by residues glycine 209–glutamate 210, serine 241, serine 263–histidine 265, and asparagine 340. The S-methylcysteine intermediate role is filled by cysteine 383.

Belongs to the radical SAM superfamily. RlmN family. The cofactor is [4Fe-4S] cluster.

It is found in the cytoplasm. The enzyme catalyses adenosine(2503) in 23S rRNA + 2 reduced [2Fe-2S]-[ferredoxin] + 2 S-adenosyl-L-methionine = 2-methyladenosine(2503) in 23S rRNA + 5'-deoxyadenosine + L-methionine + 2 oxidized [2Fe-2S]-[ferredoxin] + S-adenosyl-L-homocysteine. It carries out the reaction adenosine(37) in tRNA + 2 reduced [2Fe-2S]-[ferredoxin] + 2 S-adenosyl-L-methionine = 2-methyladenosine(37) in tRNA + 5'-deoxyadenosine + L-methionine + 2 oxidized [2Fe-2S]-[ferredoxin] + S-adenosyl-L-homocysteine. Its function is as follows. Specifically methylates position 2 of adenine 2503 in 23S rRNA and position 2 of adenine 37 in tRNAs. m2A2503 modification seems to play a crucial role in the proofreading step occurring at the peptidyl transferase center and thus would serve to optimize ribosomal fidelity. The sequence is that of Dual-specificity RNA methyltransferase RlmN from Brucella anthropi (strain ATCC 49188 / DSM 6882 / CCUG 24695 / JCM 21032 / LMG 3331 / NBRC 15819 / NCTC 12168 / Alc 37) (Ochrobactrum anthropi).